The sequence spans 106 residues: Large ribosomal subunit protein uL24 (106 aa).

The span at 84–97 (EKIGRELGAKEKAR) shows a compositional bias: basic and acidic residues. Residues 84-106 (EKIGRELGAKEKARLQKRKAAAK) form a disordered region.

It belongs to the universal ribosomal protein uL24 family. As to quaternary structure, part of the 50S ribosomal subunit.

Functionally, one of two assembly initiator proteins, it binds directly to the 5'-end of the 23S rRNA, where it nucleates assembly of the 50S subunit. Its function is as follows. One of the proteins that surrounds the polypeptide exit tunnel on the outside of the subunit. This chain is Large ribosomal subunit protein uL24, found in Anaeromyxobacter sp. (strain K).